Here is a 194-residue protein sequence, read N- to C-terminus: ATP-dependent Clp protease proteolytic subunit (194 aa).

Serine 98 serves as the catalytic Nucleophile. Residue histidine 123 is part of the active site.

It belongs to the peptidase S14 family. Fourteen ClpP subunits assemble into 2 heptameric rings which stack back to back to give a disk-like structure with a central cavity, resembling the structure of eukaryotic proteasomes.

The protein localises to the cytoplasm. It carries out the reaction Hydrolysis of proteins to small peptides in the presence of ATP and magnesium. alpha-casein is the usual test substrate. In the absence of ATP, only oligopeptides shorter than five residues are hydrolyzed (such as succinyl-Leu-Tyr-|-NHMec, and Leu-Tyr-Leu-|-Tyr-Trp, in which cleavage of the -Tyr-|-Leu- and -Tyr-|-Trp bonds also occurs).. Functionally, cleaves peptides in various proteins in a process that requires ATP hydrolysis. Has a chymotrypsin-like activity. Plays a major role in the degradation of misfolded proteins. This Sodalis glossinidius (strain morsitans) protein is ATP-dependent Clp protease proteolytic subunit.